The primary structure comprises 125 residues: Protein ApaG (125 aa).

The 125-residue stretch at M1–N125 folds into the ApaG domain.

This chain is Protein ApaG, found in Edwardsiella ictaluri (strain 93-146).